A 307-amino-acid chain; its full sequence is MTVAPEGRKLLRLEVRNAETPIERKPPWIRVRARMGPEYTELKSLVRREGLHTVCEEAGCPNIFECWEDREATFLIGGDQCTRRCDFCQIDTGKPAELDRDEPRRVADSVRTMGLRYATVTGVARDDLPDGGAWLYAETVRAIKELNPSTGVELLIPDFNGRPDRLAEVFGSRPEVLAHNVETVPRIFKRIRPAFTYRRSLDVLTAAREAGLVTKSNLILGLGETPDEVRTALADLRGAGCDIITITQYLRPSARHHPVERWVKPEEFVEFARHAEELGFSGVLAGPLVRSSYRAGRLYRQTARARA.

Residues C55, C60, C66, C81, C85, C88, and S292 each coordinate [4Fe-4S] cluster. A Radical SAM core domain is found at 67–281 (WEDREATFLI…ARHAEELGFS (215 aa)).

This sequence belongs to the radical SAM superfamily. Lipoyl synthase family. The cofactor is [4Fe-4S] cluster.

The protein localises to the cytoplasm. It carries out the reaction [[Fe-S] cluster scaffold protein carrying a second [4Fe-4S](2+) cluster] + N(6)-octanoyl-L-lysyl-[protein] + 2 oxidized [2Fe-2S]-[ferredoxin] + 2 S-adenosyl-L-methionine + 4 H(+) = [[Fe-S] cluster scaffold protein] + N(6)-[(R)-dihydrolipoyl]-L-lysyl-[protein] + 4 Fe(3+) + 2 hydrogen sulfide + 2 5'-deoxyadenosine + 2 L-methionine + 2 reduced [2Fe-2S]-[ferredoxin]. Its pathway is protein modification; protein lipoylation via endogenous pathway; protein N(6)-(lipoyl)lysine from octanoyl-[acyl-carrier-protein]: step 2/2. Its function is as follows. Catalyzes the radical-mediated insertion of two sulfur atoms into the C-6 and C-8 positions of the octanoyl moiety bound to the lipoyl domains of lipoate-dependent enzymes, thereby converting the octanoylated domains into lipoylated derivatives. The protein is Lipoyl synthase of Mycolicibacterium paratuberculosis (strain ATCC BAA-968 / K-10) (Mycobacterium paratuberculosis).